The following is a 270-amino-acid chain: DNA adenine methylase (270 aa).

S-adenosyl-L-methionine-binding residues include tryptophan 10, lysine 14, aspartate 54, and aspartate 181.

Belongs to the N(4)/N(6)-methyltransferase family.

It catalyses the reaction a 2'-deoxyadenosine in DNA + S-adenosyl-L-methionine = an N(6)-methyl-2'-deoxyadenosine in DNA + S-adenosyl-L-homocysteine + H(+). An alpha subtype methylase, recognizes the double-stranded sequence 5'-GATC-3' and methylates A-2. Overexpression leads to hypermutability. May be involved in methyl-directed DNA mismatch repair, initiation of chromosome replication and gene expression. In Serratia marcescens, this protein is DNA adenine methylase.